Consider the following 664-residue polypeptide: UvrABC system protein B (664 aa).

The 390-residue stretch at 23–412 folds into the Helicase ATP-binding domain; the sequence is EGLNRGMRFQ…VVEQIIRPTG (390 aa). Position 36-43 (36-43) interacts with ATP; it reads GVTGSGKT. Positions 89–112 match the Beta-hairpin motif; it reads YYDYYQPEAYIPTKDLYIEKNADI. Positions 429 to 588 constitute a Helicase C-terminal domain; sequence DLVNEIVKVK…ITPRSVIKPL (160 aa). The region spanning 622–657 is the UVR domain; the sequence is EEYMAVLEEEMYRAASELRYEDAAALRDELFRIREE.

This sequence belongs to the UvrB family. In terms of assembly, forms a heterotetramer with UvrA during the search for lesions. Interacts with UvrC in an incision complex.

It is found in the cytoplasm. Functionally, the UvrABC repair system catalyzes the recognition and processing of DNA lesions. A damage recognition complex composed of 2 UvrA and 2 UvrB subunits scans DNA for abnormalities. Upon binding of the UvrA(2)B(2) complex to a putative damaged site, the DNA wraps around one UvrB monomer. DNA wrap is dependent on ATP binding by UvrB and probably causes local melting of the DNA helix, facilitating insertion of UvrB beta-hairpin between the DNA strands. Then UvrB probes one DNA strand for the presence of a lesion. If a lesion is found the UvrA subunits dissociate and the UvrB-DNA preincision complex is formed. This complex is subsequently bound by UvrC and the second UvrB is released. If no lesion is found, the DNA wraps around the other UvrB subunit that will check the other stand for damage. The polypeptide is UvrABC system protein B (Thermotoga maritima (strain ATCC 43589 / DSM 3109 / JCM 10099 / NBRC 100826 / MSB8)).